A 291-amino-acid polypeptide reads, in one-letter code: Homoserine kinase (291 aa).

80 to 90 (RPSSGLGSSAA) lines the ATP pocket.

The protein belongs to the GHMP kinase family. Homoserine kinase subfamily.

It localises to the cytoplasm. It catalyses the reaction L-homoserine + ATP = O-phospho-L-homoserine + ADP + H(+). The protein operates within amino-acid biosynthesis; L-threonine biosynthesis; L-threonine from L-aspartate: step 4/5. Functionally, catalyzes the ATP-dependent phosphorylation of L-homoserine to L-homoserine phosphate. This chain is Homoserine kinase, found in Haloquadratum walsbyi (strain DSM 16790 / HBSQ001).